Here is a 261-residue protein sequence, read N- to C-terminus: Expansin-B2 (261 aa).

The first 24 residues, 1–24, serve as a signal peptide directing secretion; that stretch reads MAGASAKVVAMLLSVLATYGFAAG. The 107-residue stretch at 51-157 folds into the Expansin-like EG45 domain; sequence GGACGFKNTN…RRVPCYHRGL (107 aa). Disulfide bonds link Cys54/Cys82, Cys85/Cys152, and Cys90/Cys96. The 87-residue stretch at 170 to 256 folds into the Expansin-like CBD domain; it reads VYLAVLVEFA…NWRANTNYGS (87 aa).

The protein belongs to the expansin family. Expansin B subfamily. Expressed in roots.

The protein resides in the secreted. It is found in the cell wall. The protein localises to the membrane. Functionally, may cause loosening and extension of plant cell walls by disrupting non-covalent bonding between cellulose microfibrils and matrix glucans. No enzymatic activity has been found. May be required for rapid internodal elongation in deepwater rice during submergence. The polypeptide is Expansin-B2 (EXPB2) (Oryza sativa subsp. japonica (Rice)).